The sequence spans 299 residues: Mitochondrial 2-oxodicarboxylate carrier (299 aa).

3 Solcar repeats span residues 11-100 (NEAS…YKKL), 107-196 (SPAL…VKNI), and 205-294 (LEFL…TYSW). Helical transmembrane passes span 17–37 (ILAGGSAGLVEICLMHPLDVV), 62–82 (MIFRTEGLFGFYKGILPPILA), 100–120 (LLGYVSLSPALTFAVAGLGSG), 179–199 (HGVFNMVYFGFYFNVKNIIPV), 211–231 (FGIGLLSGTIASVINIPFDVA), and 274–290 (IMRLGPGGAVMLLVYEY).

This sequence belongs to the mitochondrial carrier (TC 2.A.29) family.

The protein resides in the mitochondrion inner membrane. The catalysed reaction is 2-oxoadipate(in) + 2-oxoglutarate(out) = 2-oxoadipate(out) + 2-oxoglutarate(in). It carries out the reaction hexanedioate(in) + 2-oxoglutarate(out) = hexanedioate(out) + 2-oxoglutarate(in). The enzyme catalyses L-2-aminoadipate(in) + 2-oxoglutarate(out) = L-2-aminoadipate(out) + 2-oxoglutarate(in). It catalyses the reaction glutarate(in) + 2-oxoglutarate(out) = glutarate(out) + 2-oxoglutarate(in). The catalysed reaction is 2-oxoheptanedioate(in) + 2-oxoglutarate(out) = 2-oxoheptanedioate(out) + 2-oxoglutarate(in). It carries out the reaction heptanedioate(in) + 2-oxoglutarate(out) = heptanedioate(out) + 2-oxoglutarate(in). The enzyme catalyses citrate(in) + 2-oxoglutarate(out) = citrate(out) + 2-oxoglutarate(in). Functionally, transports dicarboxylates across the inner membranes of mitochondria by a counter-exchange mechanism. Can transport 2-oxoadipate (2-oxohexanedioate), 2-oxoglutarate, adipate (hexanedioate), glutarate, and to a lesser extent, pimelate (heptanedioate), 2-oxopimelate (2-oxoheptanedioate), 2-aminoadipate (2-aminohexanedioate), oxaloacetate, and citrate. Plays a central role in catabolism of lysine, hydroxylysine, and tryptophan, by transporting common metabolite intermediates (such as 2-oxoadipate) into the mitochondria, where it is converted into acetyl-CoA and can enter the citric acid (TCA) cycle. This Bos taurus (Bovine) protein is Mitochondrial 2-oxodicarboxylate carrier (SLC25A21).